We begin with the raw amino-acid sequence, 240 residues long: MTVKPLYRRVLLKASGEALMGEQHFGIDVSVVDRIAADIAEARGLGIEVGVVIGGGNIFRGVAVASKGGDRVTGDHMGMLATVINSLALRTSLHKIGVDAVVLSAIAMPELCESFSQRQADAYMNQGRVVIFAGGTGNPFFTTDSAAALRAAEIGADALFKGTQVDGVYSADPKKDPNATRFERISHAEVINRGLSIMDTAAIALARENNIPIIVYSIHEKGGFGDILRGGGRCTVVADD.

Residue 13-16 (KASG) coordinates ATP. Gly55 contributes to the UMP binding site. Positions 56 and 60 each coordinate ATP. Residues Asp75 and 136–143 (TGNPFFTT) each bind UMP. Residues Thr163, Gln164, Tyr169, and Asp172 each contribute to the ATP site.

It belongs to the UMP kinase family. As to quaternary structure, homohexamer.

It is found in the cytoplasm. It carries out the reaction UMP + ATP = UDP + ADP. Its pathway is pyrimidine metabolism; CTP biosynthesis via de novo pathway; UDP from UMP (UMPK route): step 1/1. With respect to regulation, inhibited by UTP. In terms of biological role, catalyzes the reversible phosphorylation of UMP to UDP. In Mesorhizobium japonicum (strain LMG 29417 / CECT 9101 / MAFF 303099) (Mesorhizobium loti (strain MAFF 303099)), this protein is Uridylate kinase.